The following is a 251-amino-acid chain: tRNA pseudouridine synthase A 1 (251 aa).

The active-site Nucleophile is the Asp-52. Tyr-110 is a substrate binding site.

This sequence belongs to the tRNA pseudouridine synthase TruA family. As to quaternary structure, homodimer.

It catalyses the reaction uridine(38/39/40) in tRNA = pseudouridine(38/39/40) in tRNA. Functionally, formation of pseudouridine at positions 38, 39 and 40 in the anticodon stem and loop of transfer RNAs. This is tRNA pseudouridine synthase A 1 from Desulfotalea psychrophila (strain LSv54 / DSM 12343).